Reading from the N-terminus, the 611-residue chain is Glutathione hydrolase proenzyme 2 (611 aa).

The Cytoplasmic segment spans residues 1 to 42 (MSPTDTTPLLYSWDDQSRHQDPDWHKLRNYHGAWYRRISRRR). A helical; Signal-anchor for type II membrane protein transmembrane segment spans residues 43-63 (FSQFIFAFGLMTLFVLVYSIS). Over 64-611 (SNLHTPTQFT…PRKYGQAAAY (548 aa)) the chain is Lumenal. Asn138 carries an N-linked (GlcNAc...) asparagine glycan. Arg147 serves as a coordination point for L-glutamate. N-linked (GlcNAc...) asparagine glycans are attached at residues Asn153, Asn297, and Asn396. Catalysis depends on Thr420, which acts as the Nucleophile. L-glutamate contacts are provided by residues Thr438, Asn440, Gln459, Asp462, 490–491 (SS), and 512–513 (GG).

Belongs to the gamma-glutamyltransferase family. In terms of assembly, heterodimer composed of the light and heavy chains. The active site is located in the light chain. Cleaved by autocatalysis into a large and a small subunit.

The protein resides in the vacuole membrane. It catalyses the reaction an N-terminal (5-L-glutamyl)-[peptide] + an alpha-amino acid = 5-L-glutamyl amino acid + an N-terminal L-alpha-aminoacyl-[peptide]. The catalysed reaction is glutathione + H2O = L-cysteinylglycine + L-glutamate. The enzyme catalyses an S-substituted glutathione + H2O = an S-substituted L-cysteinylglycine + L-glutamate. It participates in sulfur metabolism; glutathione metabolism. Catalyzes the transfer of the gamma-glutamyl moiety of glutathione (GSH) and other gamma-glutamyl compounds to amino acids and peptides. Major GSH-degrading enzyme, catalyzing the hydrolytic release of L-glutamate from GSH. Plays a role in the turnover of the vacuolar GSH, serving as an alternative nitrogen source during nitrogen starvation. The polypeptide is Glutathione hydrolase proenzyme 2 (ggt2) (Schizosaccharomyces pombe (strain 972 / ATCC 24843) (Fission yeast)).